The following is a 155-amino-acid chain: uncharacterized protein (155 aa).

A helical membrane pass occupies residues 5 to 25 (GIIICVGIAFLIFIFLWAYFK).

It is found in the membrane. This is an uncharacterized protein from Acheta domesticus (House cricket).